We begin with the raw amino-acid sequence, 136 residues long: MAKSDVKGINLGMGTGRRKSSVARVYIREGKGDIKINNRDFDSYIQLENLKTIALSPLVLTNTLGKYDLYINIYGGGISGQAGAIRHGIARALFDLDEEYKMVLKSNGFLTRDSRKVERKKFGKKKARKSFQFSKR.

It belongs to the universal ribosomal protein uS9 family.

This chain is Small ribosomal subunit protein uS9, found in Borrelia turicatae (strain 91E135).